Reading from the N-terminus, the 480-residue chain is Vacuolar protein sorting-associated protein 9A (480 aa).

The VPS9 domain occupies 111-255 (VKSDEELFEK…IWNIDGESLS (145 aa)). Residues asparagine 189 and aspartate 194 each coordinate GTP. Residues 276–288 (SASSENQDNQNNL) show a composition bias toward polar residues. 2 disordered regions span residues 276–338 (SASS…VQSI) and 418–480 (ESEE…PEHA). Positions 289–305 (DVREQKSQTLKASRDSD) are enriched in basic and acidic residues. 3 stretches are compositionally biased toward polar residues: residues 327–338 (ASSNPVERVQSI), 427–437 (NAVNFSEGSSK), and 451–461 (VDNTGTQQTAV).

In terms of assembly, interacts with RAB5A. Interacts with GPA3 (via C-terminus).

The protein resides in the cytoplasm. The protein localises to the golgi apparatus. It is found in the trans-Golgi network. Its subcellular location is the prevacuolar compartment. Its function is as follows. Functions as a guanine nucleotide exchange factor (GEF) for Rab small GTPases. Activates specifically RAB5A protein. Functions cooperatively with RAB5A to regulate post-Golgi dense vesicle-mediated transport of storage proteins to the type II protein bodies (PBII) protein storage vacuoles in developing endosperm. The chain is Vacuolar protein sorting-associated protein 9A from Oryza sativa subsp. japonica (Rice).